The primary structure comprises 266 residues: GTP cyclohydrolase III (266 aa).

This sequence belongs to the archaeal-type GTP cyclohydrolase family.

The enzyme catalyses GTP + 3 H2O = 2-amino-5-formylamino-6-(5-phospho-D-ribosylamino)pyrimidin-4(3H)-one + 2 phosphate + 2 H(+). In terms of biological role, catalyzes the formation of 2-amino-5-formylamino-6-ribofuranosylamino-4(3H)-pyrimidinone ribonucleotide monophosphate and inorganic phosphate from GTP. Also has an independent pyrophosphate phosphohydrolase activity. The protein is GTP cyclohydrolase III of Methanococcus maripaludis (strain C7 / ATCC BAA-1331).